The primary structure comprises 252 residues: Agamous-like MADS-box protein AGL6 (252 aa).

In terms of domain architecture, MADS-box spans 3 to 57 (RGRVEMKRIENKINRQVTFSKRRNGLLKKAYELSVLCDAEVALIIFSSRGKLYEF). In terms of domain architecture, K-box spans 86-176 (TQSWCQEVTK…KIKFETEGHA (91 aa)). Residues 91–173 (QEVTKLKSKY…KQLKIKFETE (83 aa)) adopt a coiled-coil conformation.

Forms a heterodimer with AGAMOUS. Interacts with AGL15 and AGL16. In terms of tissue distribution, preferentially expressed in flowers.

It is found in the nucleus. Functionally, probable transcription factor. Forms a heterodimer via the K-box domain with AG, that could be involved in genes regulation during floral meristem development. This Arabidopsis thaliana (Mouse-ear cress) protein is Agamous-like MADS-box protein AGL6 (AGL6).